The following is a 553-amino-acid chain: CTP synthase (553 aa).

An amidoligase domain region spans residues 1 to 266; that stretch reads MKYIFVTGGV…GKAVEDLLGL (266 aa). Serine 12 serves as a coordination point for CTP. Serine 12 contributes to the UTP binding site. 13–18 is an ATP binding site; it reads SLGKGV. Tyrosine 53 is an L-glutamine binding site. Aspartate 70 provides a ligand contact to ATP. Residues aspartate 70 and glutamate 140 each coordinate Mg(2+). CTP-binding positions include 147 to 149, 187 to 192, and lysine 223; these read DIE and KTKPTQ. Residues 187-192 and lysine 223 contribute to the UTP site; that span reads KTKPTQ. A Glutamine amidotransferase type-1 domain is found at 291 to 541; that stretch reads TIAIAGKYTE…VAAALQSGPS (251 aa). Glycine 353 contacts L-glutamine. The active-site Nucleophile; for glutamine hydrolysis is cysteine 380. L-glutamine is bound by residues 381–384, glutamate 404, and arginine 464; that span reads LGMQ. Catalysis depends on residues histidine 514 and glutamate 516.

The protein belongs to the CTP synthase family. Homotetramer.

It catalyses the reaction UTP + L-glutamine + ATP + H2O = CTP + L-glutamate + ADP + phosphate + 2 H(+). It carries out the reaction L-glutamine + H2O = L-glutamate + NH4(+). The catalysed reaction is UTP + NH4(+) + ATP = CTP + ADP + phosphate + 2 H(+). Its pathway is pyrimidine metabolism; CTP biosynthesis via de novo pathway; CTP from UDP: step 2/2. Allosterically activated by GTP, when glutamine is the substrate; GTP has no effect on the reaction when ammonia is the substrate. The allosteric effector GTP functions by stabilizing the protein conformation that binds the tetrahedral intermediate(s) formed during glutamine hydrolysis. Inhibited by the product CTP, via allosteric rather than competitive inhibition. Its function is as follows. Catalyzes the ATP-dependent amination of UTP to CTP with either L-glutamine or ammonia as the source of nitrogen. Regulates intracellular CTP levels through interactions with the four ribonucleotide triphosphates. This chain is CTP synthase, found in Deinococcus geothermalis (strain DSM 11300 / CIP 105573 / AG-3a).